Reading from the N-terminus, the 621-residue chain is TOX high mobility group box family member 4 (621 aa).

Disordered stretches follow at residues 153 to 227 and 305 to 333; these read LGLS…QKPV and LDPAPPSQTPSPPPMATVDPASPAPASIE. Thr176 is subject to Phosphothreonine. Residues Ser178, Ser181, and Ser182 each carry the phosphoserine modification. Positions 183–193 are enriched in basic and acidic residues; that stretch reads LHEDGVEDFRR. Residues 208–218 show a composition bias toward basic residues; it reads KQKAPKKRKKK. The Nuclear localization signal motif lies at 213 to 218; that stretch reads KKRKKK. Residues 223–291 constitute a DNA-binding region (HMG box); that stretch reads PQKPVSAYAL…EYLKALAAYK (69 aa). A compositionally biased stretch (pro residues) spans 307–319; sequence PAPPSQTPSPPPM. Thr313 carries the post-translational modification Phosphothreonine. Ser315 bears the Phosphoserine mark. Positions 320 to 333 are enriched in low complexity; sequence ATVDPASPAPASIE. The residue at position 481 (Arg481) is an Asymmetric dimethylarginine. Residues 510-525 are compositionally biased toward polar residues; sequence PTVESSPERPMNNSPE. The disordered stretch occupies residues 510–529; sequence PTVESSPERPMNNSPEAHTV. Ser533, Ser550, Ser552, Ser560, Ser562, and Ser567 each carry phosphoserine.

In terms of assembly, component of the PNUTS-PP1 phosphatase complex, composed of PPP1R10/PNUTS, TOX4, WDR82 and PPP1CA or PPP1CB or PPP1CC. Interacts with PPP1R10/PNUTS. Interacts with FOXO1 and CREB1 (increased by cAMP); FOXO1 and CREB1 are required for full induction of TOX4-dependent activity and the interactions are inhibited by insulin. Expressed in liver (at protein level).

It is found in the nucleus. The protein localises to the chromosome. In liver, recruited to target gene promoters following treatment with dexamethasone and cAMP. Binding is decreased in presence of insulin. In terms of biological role, transcription factor that modulates cell fate reprogramming from the somatic state to the pluripotent and neuronal fate. In liver, controls the expression of hormone-regulated gluconeogenic genes such as G6PC1 and PCK1. This regulation is independent of the insulin receptor activation. Also acts as a regulatory component of protein phosphatase 1 (PP1) complexes. Component of the PNUTS-PP1 protein phosphatase complex, a PP1 complex that regulates RNA polymerase II transcription pause-release. PNUTS-PP1 also plays a role in the control of chromatin structure and cell cycle progression during the transition from mitosis into interphase. The protein is TOX high mobility group box family member 4 of Homo sapiens (Human).